Here is a 145-residue protein sequence, read N- to C-terminus: Large ribosomal subunit protein uL13 (145 aa).

Belongs to the universal ribosomal protein uL13 family. Part of the 50S ribosomal subunit.

In terms of biological role, this protein is one of the early assembly proteins of the 50S ribosomal subunit, although it is not seen to bind rRNA by itself. It is important during the early stages of 50S assembly. In Brevibacillus brevis (strain 47 / JCM 6285 / NBRC 100599), this protein is Large ribosomal subunit protein uL13.